The following is a 283-amino-acid chain: NAD kinase (283 aa).

The active-site Proton acceptor is the D65. NAD(+) is bound by residues 65 to 66 (DG), 139 to 140 (ND), R150, R167, D169, 180 to 185 (TGYSVS), and Q239.

It belongs to the NAD kinase family. A divalent metal cation is required as a cofactor.

Its subcellular location is the cytoplasm. The enzyme catalyses NAD(+) + ATP = ADP + NADP(+) + H(+). Involved in the regulation of the intracellular balance of NAD and NADP, and is a key enzyme in the biosynthesis of NADP. Catalyzes specifically the phosphorylation on 2'-hydroxyl of the adenosine moiety of NAD to yield NADP. The chain is NAD kinase from Nitratidesulfovibrio vulgaris (strain DSM 19637 / Miyazaki F) (Desulfovibrio vulgaris).